Consider the following 472-residue polypeptide: 3-isopropylmalate dehydratase large subunit (472 aa).

[4Fe-4S] cluster-binding residues include Cys347, Cys407, and Cys410.

Belongs to the aconitase/IPM isomerase family. LeuC type 1 subfamily. In terms of assembly, heterodimer of LeuC and LeuD. The cofactor is [4Fe-4S] cluster.

It carries out the reaction (2R,3S)-3-isopropylmalate = (2S)-2-isopropylmalate. Its pathway is amino-acid biosynthesis; L-leucine biosynthesis; L-leucine from 3-methyl-2-oxobutanoate: step 2/4. Its function is as follows. Catalyzes the isomerization between 2-isopropylmalate and 3-isopropylmalate, via the formation of 2-isopropylmaleate. This chain is 3-isopropylmalate dehydratase large subunit, found in Bacillus subtilis (strain 168).